The following is a 236-amino-acid chain: 2-C-methyl-D-erythritol 4-phosphate cytidylyltransferase (236 aa).

It belongs to the IspD/TarI cytidylyltransferase family. IspD subfamily.

It carries out the reaction 2-C-methyl-D-erythritol 4-phosphate + CTP + H(+) = 4-CDP-2-C-methyl-D-erythritol + diphosphate. Its pathway is isoprenoid biosynthesis; isopentenyl diphosphate biosynthesis via DXP pathway; isopentenyl diphosphate from 1-deoxy-D-xylulose 5-phosphate: step 2/6. Its function is as follows. Catalyzes the formation of 4-diphosphocytidyl-2-C-methyl-D-erythritol from CTP and 2-C-methyl-D-erythritol 4-phosphate (MEP). The polypeptide is 2-C-methyl-D-erythritol 4-phosphate cytidylyltransferase (Pseudomonas syringae pv. tomato (strain ATCC BAA-871 / DC3000)).